A 338-amino-acid chain; its full sequence is Tagatose 1,6-diphosphate aldolase (338 aa).

Belongs to the aldolase LacD family.

It carries out the reaction D-tagatofuranose 1,6-bisphosphate = D-glyceraldehyde 3-phosphate + dihydroxyacetone phosphate. Its pathway is carbohydrate metabolism; D-tagatose 6-phosphate degradation; D-glyceraldehyde 3-phosphate and glycerone phosphate from D-tagatose 6-phosphate: step 2/2. In Listeria monocytogenes serotype 4b (strain CLIP80459), this protein is Tagatose 1,6-diphosphate aldolase.